Consider the following 590-residue polypeptide: Leucine-rich repeat transmembrane neuronal protein 4 (590 aa).

The signal sequence occupies residues Met-1–Ala-30. The LRRNT domain maps to Gln-31–Gly-61. Residues Gln-31–Lys-424 lie on the Extracellular side of the membrane. N-linked (GlcNAc...) asparagine glycosylation is present at Asn-58. LRR repeat units follow at residues Gly-62 to Gly-83, Gln-86 to Gly-107, Arg-110 to Pro-131, Asn-134 to Gly-155, Lys-158 to Asp-179, Asn-182 to Gly-203, Lys-206 to Pro-226, Asn-230 to Thr-251, Ser-254 to Cys-275, and Asn-278 to Ala-299. A glycan (N-linked (GlcNAc...) asparagine) is linked at Asn-126. Residue Asn-291 is glycosylated (N-linked (GlcNAc...) asparagine). Residues Asn-311 to Glu-362 form the LRRCT domain. Residues Ile-425–Val-445 form a helical membrane-spanning segment. Over Ser-446–Asn-590 the chain is Cytoplasmic.

Belongs to the LRRTM family. Peripherally associated with AMPAR complex. AMPAR complex consists of an inner core made of 4 pore-forming GluA/GRIA proteins (GRIA1, GRIA2, GRIA3 and GRIA4) and 4 major auxiliary subunits arranged in a twofold symmetry. One of the two pairs of distinct binding sites is occupied either by CNIH2, CNIH3 or CACNG2, CACNG3. The other harbors CACNG2, CACNG3, CACNG4, CACNG8 or GSG1L. This inner core of AMPAR complex is complemented by outer core constituents binding directly to the GluA/GRIA proteins at sites distinct from the interaction sites of the inner core constituents. Outer core constituents include at least PRRT1, PRRT2, CKAMP44/SHISA9, FRRS1L and NRN1. The proteins of the inner and outer core serve as a platform for other, more peripherally associated AMPAR constituents, including LRRTM4. Alone or in combination, these auxiliary subunits control the gating and pharmacology of the AMPAR complex and profoundly impact their biogenesis and protein processing. Expressed in neuronal tissues.

It localises to the cell membrane. The protein localises to the postsynaptic cell membrane. May play a role in the development and maintenance of the vertebrate nervous system. Exhibits strong synaptogenic activity, restricted to excitatory presynaptic differentiation. The polypeptide is Leucine-rich repeat transmembrane neuronal protein 4 (LRRTM4) (Homo sapiens (Human)).